Consider the following 286-residue polypeptide: uncharacterized protein (286 aa).

Residues 8–28 (PLSGFISSLIWWLLFFYLIMA) traverse the membrane as a helical segment.

It to M.jannaschii MJ1495.

It is found in the membrane. This is an uncharacterized protein from Methanocaldococcus jannaschii (strain ATCC 43067 / DSM 2661 / JAL-1 / JCM 10045 / NBRC 100440) (Methanococcus jannaschii).